We begin with the raw amino-acid sequence, 1293 residues long: Phosphoribosylformylglycinamidine synthase (1293 aa).

Residues 305–316 (GAATGSGGEIRD) and alanine 676 contribute to the ATP site. The disordered stretch occupies residues 305-328 (GAATGSGGEIRDEGATGRGSKPKA). Residues aspartate 677, glutamate 716, asparagine 720, and aspartate 884 each coordinate Mg(2+). An ATP-binding site is contributed by serine 886. In terms of domain architecture, Glutamine amidotransferase type-1 spans 1040 to 1293 (MAILREQGVN…MFRNARVNLG (254 aa)). Cysteine 1133 (nucleophile) is an active-site residue. Residues histidine 1258 and glutamate 1260 contribute to the active site.

In the N-terminal section; belongs to the FGAMS family. As to quaternary structure, monomer.

The protein localises to the cytoplasm. It carries out the reaction N(2)-formyl-N(1)-(5-phospho-beta-D-ribosyl)glycinamide + L-glutamine + ATP + H2O = 2-formamido-N(1)-(5-O-phospho-beta-D-ribosyl)acetamidine + L-glutamate + ADP + phosphate + H(+). It participates in purine metabolism; IMP biosynthesis via de novo pathway; 5-amino-1-(5-phospho-D-ribosyl)imidazole from N(2)-formyl-N(1)-(5-phospho-D-ribosyl)glycinamide: step 1/2. Its function is as follows. Phosphoribosylformylglycinamidine synthase involved in the purines biosynthetic pathway. Catalyzes the ATP-dependent conversion of formylglycinamide ribonucleotide (FGAR) and glutamine to yield formylglycinamidine ribonucleotide (FGAM) and glutamate. The polypeptide is Phosphoribosylformylglycinamidine synthase (Shewanella sp. (strain MR-7)).